We begin with the raw amino-acid sequence, 124 residues long: Small ribosomal subunit protein uS12 (124 aa).

The disordered stretch occupies residues 1-30; that stretch reads MPTIQQLVRKGRQDKVAKTKTAALKGSPQR. Residue Asp-89 is modified to 3-methylthioaspartic acid. The segment at 102–124 is disordered; sequence ADTQGVKNRKQARSRYGAKKEKS. Residues 108–118 are compositionally biased toward basic residues; it reads KNRKQARSRYG.

It belongs to the universal ribosomal protein uS12 family. As to quaternary structure, part of the 30S ribosomal subunit. Contacts proteins S8 and S17. May interact with IF1 in the 30S initiation complex.

With S4 and S5 plays an important role in translational accuracy. Functionally, interacts with and stabilizes bases of the 16S rRNA that are involved in tRNA selection in the A site and with the mRNA backbone. Located at the interface of the 30S and 50S subunits, it traverses the body of the 30S subunit contacting proteins on the other side and probably holding the rRNA structure together. The combined cluster of proteins S8, S12 and S17 appears to hold together the shoulder and platform of the 30S subunit. The protein is Small ribosomal subunit protein uS12 of Saccharopolyspora erythraea (strain ATCC 11635 / DSM 40517 / JCM 4748 / NBRC 13426 / NCIMB 8594 / NRRL 2338).